The sequence spans 153 residues: Arginine repressor (153 aa).

This sequence belongs to the ArgR family.

It is found in the cytoplasm. It functions in the pathway amino-acid biosynthesis; L-arginine biosynthesis [regulation]. Its function is as follows. Regulates arginine biosynthesis genes. This is Arginine repressor from Syntrophomonas wolfei subsp. wolfei (strain DSM 2245B / Goettingen).